A 120-amino-acid polypeptide reads, in one-letter code: Nitrogen regulatory protein GlnK1 (120 aa).

ADP-binding positions include Thr40, 48 to 50, Val75, and 98 to 101; these read GEQ and GDGR. ATP contacts are provided by residues Thr40, 48-50, Val75, and 98-101; these read GEQ and GDGR.

It belongs to the P(II) protein family. Homotrimer. Interacts and forms a complex with Amt1.

It is found in the cytoplasm. Its function is as follows. Involved in the regulation of nitrogen metabolism. Regulates the activity of its targets by protein-protein interaction in response to the nitrogen status of the cell. Regulates the activity of the ammonia channel Amt1 via direct interaction. The chain is Nitrogen regulatory protein GlnK1 from Archaeoglobus fulgidus (strain ATCC 49558 / DSM 4304 / JCM 9628 / NBRC 100126 / VC-16).